The sequence spans 95 residues: Small ribosomal subunit protein bS6 (95 aa).

The protein belongs to the bacterial ribosomal protein bS6 family.

In terms of biological role, binds together with bS18 to 16S ribosomal RNA. The protein is Small ribosomal subunit protein bS6 of Clostridium kluyveri (strain NBRC 12016).